The following is a 2147-amino-acid chain: MNSIHKQHYTINSNHYNESININSLLLNDLNDEKRTTSTNNKSNNNSNNNNNETLEDIIEFNNNNCNGDMKYLDLSKRMIYSLELMMIPEIENRFQGDFKSISILNLNDNLLGEIPESLKQLTQLISLSIRGNHILEIPLWFPEEFKLLRKLDVSHNAISSVPNTFNKFSILEDLNLSNNYISYIHPSLFPEGIMRLNLSNNLFREVELPPWFESLLTLDISGNKLKHLGNLPFHLVRVSIDDNHLESIDHKVILRNKDLALKFNQSFSDIVLERIYQCWYTGDPVLDLSGLGMCVVPPILGMLVHLTHLDLSGNCISVLPPELANLTELVRLDLSFNILTTLPLYIVSYKRLEHLDLQGTLDTLVSPPRRIAETGKLIDIQRYFHDLFQGEPSYRVKLMIVGQENVGKTSLVKCLKMKKKFSKNSDHLGTNVSTDGIDIDEIKFNLDIELPSNPSSNSLISNSLSNSSISSNNINSNNNINVHSNGGGINSNGVNSNSQININSSSGNIHSNGGGVGNVNSSGGIHSNNSSGGGGGSNSFLNNTNSNGTNNNSSNLNINTNSNNVNSSGGGNNYHPPVGTNTSMSNIQVIGSSGSNLGSGSNLSIGGSNGNNNNNSGGSGTMVNQRVTMSIWDCAGQELYYTSHQMFLTDSALYVVVWNLCKPEVNSRVEFWLHSIRSKAENAPILLIGTHLDDYLATHSESELDEILENIYSKYFRKFRLKGISILSCSTGVGFDNFLDLLKKTVVELPSLKQSLPELYLKLEKLIIKKRSTLVPPVLTWQSFSQMVLSNLDFHDEIHVKVATKALVPLGSISFFDEPGLDQYVFLDPQWLTGVFSSIITTKHKFIKDGVLKKSDLYQIWKPPHFIEDEGLHSLLINLLERFELMFPLDSDLVSLSSSNGNNGNSYVNNNNNNNNNSNNNNNGSNKSSPFKTTPSSPSTLRLVDSKSKGSHSSNPILSGNNSSSKNSTSTKRSISGSPLRSRSNSDLDLIGGGGGSPINGSSIDYSSKSNTLTPGLFNELNQKFIIPSQLPEIRPSFGLLWPSLDHSRVEFNRWIQLSFAPAGLFSRLLIRLLISKEFDMKPILYWRNGVVVESQSGKSFLSTSTALIEMVPSYANCSSTIKISVRGDRRTGRGLSAKLLRLIVEIADTLCTSWYHLETNQVIPCPHCINKPNCTLFSLSDCEAVASSGVWYLLCGDRKINFETFVPDVAMSDFWGSGSKKFNYDQIKMHKEKRILSIKPASFGNNQIQFEVRVPPSPPPPPVQQIINNGADDNITTTTLAVNNIKVLESGGSQPPSPRSGKDVTHELPIINRLEIIQPTSDESSLIQVEFDHNNQTLVISGTYKYGDLLEIEFESPKLIGRGASGKIYRANLNDTMVAVKQLEVVGEDAPRIFSEFRREIHVMSDLKHSNVVNLLGFTLSPFTMVMEYIDCGDLHKFLHSPIGDQLNGNWALILKLALDIAKGMEFLHSVTPPLLHRDLKSPNVLLSMKDGVYTAKVGDFGLSSRMFIQALKHKLRNFPVGNITWVAPEILREEEYTVKSDVYAFGLILHELLTRKHPYREFNYSMVSLQEDAIKNGLRPTISPSYTQTVTGHEYCGLIQDCWDSDIDRRPTFNKIVKRIKQIIGRDVNNILMVNGVSVVSGIQSPNSLADSQPFHYHQQQQPSLNSTNQLQQQQYSSVLTSPRSNLSDSSNSSQNIANKSLNNISATSLGDLGGNDENLGGQLQYSMRVPQPEAKVNQLVWEVNSRRVWGGCESGEIIVWNAENGNQIFREQKLHPGPIRSLALVNQEDIWSAGGIGPQQSTIRIWNAWRFNLDDQSGTKSDFITKKGRGGSTFGRKSWRLRWFVLSRFDKTLKYYSKQTDKEPSCSLILEGAWLEEISPPGYKVSLHLIHPEKRTMEMEFKSESEKSSWLTAINRVINQNIPLYEIALGKQMTSGSENDYITNLLSVGPNVWVSLKETPSILVYNVKSKELVTKISLNDDQSSDQWGKTGAVNMMLVNNFVWITGGSKLTQIDSQSYQLLEVHGNHYSKPITSMALVEKNVWISCEDESLSVWDGDTGSFIRKVGSPIGSPTKPTVYTKLLYFSGYVWACTQGSIHIYCIHSLTCKKKVESKNHPNSIVDLIKVFQQTVWSCCGTNNVCIWS.

At 1-1055 (MNSIHKQHYT…LDHSRVEFNR (1055 aa)) the chain is on the extracellular side. LRR repeat units lie at residues 69–89 (DMKY…MMIP), 101–122 (SISI…LKQL), 124–145 (QLIS…FPEE), 148–169 (LLRK…FNKF), 171–192 (ILED…LFPE), 193–214 (GIMR…PWFE), 215–236 (SLLT…PFHL), 237–256 (VRVS…VILR), 306–328 (HLTH…ANLT), 329–350 (ELVR…IVSY), and 352–372 (RLEH…PRRI). Positions 390 to 750 (QGEPSYRVKL…DLLKKTVVEL (361 aa)) constitute a Roc domain. The tract at residues 390-750 (QGEPSYRVKL…DLLKKTVVEL (361 aa)) is small GTPase-like. Position 403-410 (403-410 (GQENVGKT)) interacts with GTP. Disordered stretches follow at residues 491–582 (NSNG…VGTN) and 602–621 (SNLS…GGSG). Composition is skewed to low complexity over residues 492–512 (SNGV…NIHS), 519–531 (NVNS…SNNS), 539–568 (NSFL…NVNS), and 602–617 (SNLS…NNNS). GTP-binding positions include 634-638 (DCAGQ) and 691-694 (THLD). Residues 758-892 (PELYLKLEKL…RFELMFPLDS (135 aa)) enclose the COR domain. Composition is skewed to low complexity over residues 905–941 (GNSY…SPST) and 960–977 (SGNN…RSIS). A disordered region spans residues 905–995 (GNSYVNNNNN…NSDLDLIGGG (91 aa)). The stretch at 1051 to 1098 (VEFNRWIQLSFAPAGLFSRLLIRLLISKEFDMKPILYWRNGVVVESQS) is one WD 1 repeat. The chain crosses the membrane as a helical span at residues 1056-1076 (WIQLSFAPAGLFSRLLIRLLI). Over 1077–2147 (SKEFDMKPIL…CGTNNVCIWS (1071 aa)) the chain is Cytoplasmic. LRR repeat units follow at residues 1237-1263 (ILSI…PPPP), 1274-1297 (DDNI…GSQP), and 1325-1348 (ESSL…TYKY). One can recognise a Protein kinase domain in the interval 1356-1627 (FESPKLIGRG…KIVKRIKQII (272 aa)). Residues 1362 to 1370 (IGRGASGKI) and lysine 1383 each bind ATP. Aspartate 1481 acts as the Proton acceptor in catalysis. Residues 1653–1699 (ADSQPFHYHQQQQPSLNSTNQLQQQQYSSVLTSPRSNLSDSSNSSQN) form a disordered region. Residues 1662-1699 (QQQQPSLNSTNQLQQQQYSSVLTSPRSNLSDSSNSSQN) are compositionally biased toward low complexity. WD repeat units lie at residues 1735–1774 (QPEA…QIFR) and 1778–1820 (LHPG…LDDQ). Residues 1821–1923 (SGTKSDFITK…WLTAINRVIN (103 aa)) form the PH domain. One copy of the WD 4 repeat lies at 2031–2068 (HYSKPITSMALVEKNVWISCEDESLSVWDGDTGSFIRK).

The protein belongs to the protein kinase superfamily. TKL Ser/Thr protein kinase family. ROCO subfamily.

It is found in the membrane. It catalyses the reaction L-seryl-[protein] + ATP = O-phospho-L-seryl-[protein] + ADP + H(+). The enzyme catalyses L-threonyl-[protein] + ATP = O-phospho-L-threonyl-[protein] + ADP + H(+). Its function is as follows. May act as a serine/threonine-protein kinase and guanine-nucleotide releasing factor. In Dictyostelium discoideum (Social amoeba), this protein is Probable serine/threonine-protein kinase roco6 (roco6).